The chain runs to 410 residues: Translation initiation factor 2 subunit gamma (410 aa).

The tr-type G domain maps to 6–203 (QSEVNIGMVG…AIQDFIPTPE (198 aa)). A G1 region spans residues 15–22 (GHVDHGKT). Mg(2+) contacts are provided by aspartate 18, threonine 22, glycine 43, and serine 45. 18 to 23 (DHGKTS) is a GTP binding site. Residues 43-47 (GISIR) are G2. Zn(2+) contacts are provided by cysteine 58, cysteine 61, cysteine 73, and cysteine 76. Positions 90–93 (DAPG) are G3. Residues 146–149 (NKID) and 181–183 (SAH) contribute to the GTP site. The tract at residues 146-149 (NKID) is G4. The interval 181–183 (SAH) is G5.

It belongs to the TRAFAC class translation factor GTPase superfamily. Classic translation factor GTPase family. EIF2G subfamily. As to quaternary structure, heterotrimer composed of an alpha, a beta and a gamma chain. Requires Mg(2+) as cofactor.

The catalysed reaction is GTP + H2O = GDP + phosphate + H(+). Its function is as follows. eIF-2 functions in the early steps of protein synthesis by forming a ternary complex with GTP and initiator tRNA. The polypeptide is Translation initiation factor 2 subunit gamma (Methanococcus maripaludis (strain DSM 14266 / JCM 13030 / NBRC 101832 / S2 / LL)).